Consider the following 29-residue polypeptide: Potassium channel toxin alpha-KTx 3.15 (29 aa).

A disulfide bond links Cys8 and Cys27.

The protein belongs to the short scorpion toxin superfamily. Potassium channel inhibitor family. Alpha-KTx 03 subfamily. In terms of tissue distribution, expressed by the venom gland.

Its subcellular location is the secreted. In terms of biological role, may play a role in blocking voltage-gated potassium channels Kv1.1/KCNA1, Kv1.3/KCNA3 and Kv1.6/KCNA6. This Mesobuthus gibbosus (Mediterranean checkered scorpion) protein is Potassium channel toxin alpha-KTx 3.15.